The chain runs to 124 residues: Large ribosomal subunit protein bL12 (124 aa).

It belongs to the bacterial ribosomal protein bL12 family. Homodimer. Part of the ribosomal stalk of the 50S ribosomal subunit. Forms a multimeric L10(L12)X complex, where L10 forms an elongated spine to which 2 to 4 L12 dimers bind in a sequential fashion. Binds GTP-bound translation factors.

In terms of biological role, forms part of the ribosomal stalk which helps the ribosome interact with GTP-bound translation factors. Is thus essential for accurate translation. The chain is Large ribosomal subunit protein bL12 from Jannaschia sp. (strain CCS1).